Here is a 223-residue protein sequence, read N- to C-terminus: UPF0441 protein KPN78578_33850 (223 aa).

The disordered stretch occupies residues 165–223; sequence SYGAAQPGRTMNVPKTAMAPKPATTTTVTRGGFGESVAKQSTMQRSAAGSTSSSRSMGG. 2 stretches are compositionally biased toward low complexity: residues 177 to 193 and 209 to 223; these read VPKT…TTVT and RSAA…SMGG.

This sequence belongs to the UPF0441 family.

The polypeptide is UPF0441 protein KPN78578_33850 (Klebsiella pneumoniae subsp. pneumoniae (strain ATCC 700721 / MGH 78578)).